Reading from the N-terminus, the 183-residue chain is Peptide deformylase (183 aa).

Residues C110 and H153 each contribute to the Fe cation site. E154 is a catalytic residue. H157 is a Fe cation binding site.

This sequence belongs to the polypeptide deformylase family. Fe(2+) serves as cofactor.

The catalysed reaction is N-terminal N-formyl-L-methionyl-[peptide] + H2O = N-terminal L-methionyl-[peptide] + formate. Functionally, removes the formyl group from the N-terminal Met of newly synthesized proteins. Requires at least a dipeptide for an efficient rate of reaction. N-terminal L-methionine is a prerequisite for activity but the enzyme has broad specificity at other positions. The sequence is that of Peptide deformylase from Oceanobacillus iheyensis (strain DSM 14371 / CIP 107618 / JCM 11309 / KCTC 3954 / HTE831).